The chain runs to 137 residues: Putative pre-16S rRNA nuclease (137 aa).

This sequence belongs to the YqgF nuclease family.

It localises to the cytoplasm. Functionally, could be a nuclease involved in processing of the 5'-end of pre-16S rRNA. The chain is Putative pre-16S rRNA nuclease from Bacillus mycoides (strain KBAB4) (Bacillus weihenstephanensis).